Here is a 524-residue protein sequence, read N- to C-terminus: uncharacterized protein (524 aa).

Positions 1–21 are cleaved as a signal peptide; it reads MLLRSVWYKLGSLLIILPLTG. The N-palmitoyl cysteine moiety is linked to residue Cys-22. Cys-22 is lipidated: S-diacylglycerol cysteine.

This sequence belongs to the MG067/MG068/MG395 family.

It localises to the cell membrane. This is an uncharacterized protein from Mycoplasma pneumoniae (strain ATCC 29342 / M129 / Subtype 1) (Mycoplasmoides pneumoniae).